The sequence spans 192 residues: Thioredoxin-like 3-2, chloroplastic (192 aa).

Residues 1–55 (MSEIVNLSSSLRSLNPKISPLVPPYRQTSSSFSRPRNFKYHSFTDKICLAAERIR) constitute a chloroplast transit peptide. In terms of domain architecture, Thioredoxin spans 66–191 (LQELDDSPVS…VREMIENDSI (126 aa)). Catalysis depends on nucleophile residues Cys110 and Cys113. The cysteines at positions 110 and 113 are disulfide-linked.

This sequence belongs to the thioredoxin family.

It is found in the plastid. Its subcellular location is the chloroplast stroma. In terms of biological role, probable thiol-disulfide oxidoreductase that may participate in various redox reactions. In Arabidopsis thaliana (Mouse-ear cress), this protein is Thioredoxin-like 3-2, chloroplastic (WCRKC2).